Here is a 234-residue protein sequence, read N- to C-terminus: Ubiquitin domain-containing protein 2 (234 aa).

The interval M1–T46 is disordered. The segment covering H9–G21 has biased composition (polar residues). The segment covering L32–S41 has biased composition (basic and acidic residues). Residues S152 to Q227 form the Ubiquitin-like domain.

It localises to the cytoplasm. The polypeptide is Ubiquitin domain-containing protein 2 (UBTD2) (Bos taurus (Bovine)).